Consider the following 117-residue polypeptide: MAEQISSAKAEARTVRIAPRKARLVVDLIRGKSVAEALAILQFTPRAASPIVEKVLKSAIANAEHNYDLESANLYVSEAYVNEGATLKRFRPRAKGMASPINKRTSHVVVVVSEKND.

This sequence belongs to the universal ribosomal protein uL22 family. In terms of assembly, part of the 50S ribosomal subunit.

Functionally, this protein binds specifically to 23S rRNA; its binding is stimulated by other ribosomal proteins, e.g. L4, L17, and L20. It is important during the early stages of 50S assembly. It makes multiple contacts with different domains of the 23S rRNA in the assembled 50S subunit and ribosome. In terms of biological role, the globular domain of the protein is located near the polypeptide exit tunnel on the outside of the subunit, while an extended beta-hairpin is found that lines the wall of the exit tunnel in the center of the 70S ribosome. This is Large ribosomal subunit protein uL22 from Lactobacillus gasseri (strain ATCC 33323 / DSM 20243 / BCRC 14619 / CIP 102991 / JCM 1131 / KCTC 3163 / NCIMB 11718 / NCTC 13722 / AM63).